A 152-amino-acid chain; its full sequence is Cell division protein SepF (152 aa).

The interval 25-54 (EEREPVQEEKGTKDKAAFQERPQTGKQNVV) is disordered. Positions 28–42 (EPVQEEKGTKDKAAF) are enriched in basic and acidic residues.

It belongs to the SepF family. As to quaternary structure, homodimer. Interacts with FtsZ.

It is found in the cytoplasm. Cell division protein that is part of the divisome complex and is recruited early to the Z-ring. Probably stimulates Z-ring formation, perhaps through the cross-linking of FtsZ protofilaments. Its function overlaps with FtsA. The polypeptide is Cell division protein SepF (Bacillus pumilus (strain SAFR-032)).